The primary structure comprises 536 residues: G-protein coupled receptor Mth2 (536 aa).

Cystine bridges form between Cys-17–Cys-71, Cys-73–Cys-78, Cys-82–Cys-177, Cys-83–Cys-96, and Cys-138–Cys-197. N-linked (GlcNAc...) asparagine glycosylation is found at Asn-24 and Asn-33. N-linked (GlcNAc...) asparagine glycosylation is found at Asn-103, Asn-113, Asn-118, Asn-159, and Asn-184. Residues 212-232 (YAMMFSIPFMMLTIAVYLLIP) traverse the membrane as a helical segment. Topologically, residues 233–241 (ELRNQHGKS) are cytoplasmic. Residues 242 to 262 (LVCYLIGLTVGYSSLCYVQLY) form a helical membrane-spanning segment. Over 263 to 273 (QVDATGVTCKV) the chain is Extracellular. A helical transmembrane segment spans residues 274–294 (FGYTAYFFFMGAYMWLSVISF). The Cytoplasmic portion of the chain corresponds to 295–314 (DLWHNFRGTRGINRFQEKKR). Residues 315–335 (FLFYSLYSWGIALVFLAFTYC) traverse the membrane as a helical segment. Residues 336-365 (AQQLSNLPDNLKPGIGDGVYCWLDMSNWAA) are Extracellular-facing. The chain crosses the membrane as a helical span at residues 366-386 (MIYFYGPILAIVVANTIMFIM). Residues 387–417 (TAIKIHGVQREMARIIASENSTKNLRTEKDK) lie on the Cytoplasmic side of the membrane. Residues 418–438 (FGLFLRLFLIMGITWLTELIS) form a helical membrane-spanning segment. Over 439–449 (YFVGSDKGWSK) the chain is Extracellular. Residues 450-470 (LFYISDLANAMQGFLIFMLFV) form a helical membrane-spanning segment. Over 471 to 536 (MKKKVKHLIT…VDPQKTTIFR (66 aa)) the chain is Cytoplasmic. Residues 487 to 506 (RDGSNQRQSQYSTKTTSSSV) are disordered. Low complexity predominate over residues 492-505 (QRQSQYSTKTTSSS).

The protein belongs to the G-protein coupled receptor 2 family. Mth subfamily. Homodimer.

The protein resides in the cell membrane. Functionally, involved in biological aging and stress response. Essential for adult survival. The sequence is that of G-protein coupled receptor Mth2 (mth2) from Drosophila simulans (Fruit fly).